Here is a 330-residue protein sequence, read N- to C-terminus: Ketol-acid reductoisomerase (NADP(+)) (330 aa).

In terms of domain architecture, KARI N-terminal Rossmann spans 2–182; sequence VEIYYDDDAS…GGTRAGALRT (181 aa). Residues 25-28, serine 51, and serine 53 contribute to the NADP(+) site; that span reads YGSQ. Residue histidine 108 is part of the active site. Glycine 134 lines the NADP(+) pocket. Residues 183–328 form the KARI C-terminal knotted domain; that stretch reads TFTEETETDL…AKLRPLMSWI (146 aa). 4 residues coordinate Mg(2+): aspartate 191, glutamate 195, glutamate 227, and glutamate 231. Serine 252 contributes to the substrate binding site.

Belongs to the ketol-acid reductoisomerase family. Requires Mg(2+) as cofactor.

The catalysed reaction is (2R)-2,3-dihydroxy-3-methylbutanoate + NADP(+) = (2S)-2-acetolactate + NADPH + H(+). The enzyme catalyses (2R,3R)-2,3-dihydroxy-3-methylpentanoate + NADP(+) = (S)-2-ethyl-2-hydroxy-3-oxobutanoate + NADPH + H(+). It participates in amino-acid biosynthesis; L-isoleucine biosynthesis; L-isoleucine from 2-oxobutanoate: step 2/4. Its pathway is amino-acid biosynthesis; L-valine biosynthesis; L-valine from pyruvate: step 2/4. Its function is as follows. Involved in the biosynthesis of branched-chain amino acids (BCAA). Catalyzes an alkyl-migration followed by a ketol-acid reduction of (S)-2-acetolactate (S2AL) to yield (R)-2,3-dihydroxy-isovalerate. In the isomerase reaction, S2AL is rearranged via a Mg-dependent methyl migration to produce 3-hydroxy-3-methyl-2-ketobutyrate (HMKB). In the reductase reaction, this 2-ketoacid undergoes a metal-dependent reduction by NADPH to yield (R)-2,3-dihydroxy-isovalerate. This chain is Ketol-acid reductoisomerase (NADP(+)), found in Frankia alni (strain DSM 45986 / CECT 9034 / ACN14a).